The following is a 103-amino-acid chain: Iron-sulfur cluster assembly protein CyaY (103 aa).

Belongs to the frataxin family.

Its function is as follows. Involved in iron-sulfur (Fe-S) cluster assembly. May act as a regulator of Fe-S biogenesis. The polypeptide is Iron-sulfur cluster assembly protein CyaY (Rickettsia africae (strain ESF-5)).